A 365-amino-acid chain; its full sequence is Flagellar P-ring protein (365 aa).

The N-terminal stretch at 1-19 (MIKFLSALILLLVITAAQA) is a signal peptide.

The protein belongs to the FlgI family. In terms of assembly, the basal body constitutes a major portion of the flagellar organelle and consists of four rings (L,P,S, and M) mounted on a central rod.

It localises to the periplasm. The protein localises to the bacterial flagellum basal body. Its function is as follows. Assembles around the rod to form the L-ring and probably protects the motor/basal body from shearing forces during rotation. The polypeptide is Flagellar P-ring protein (Escherichia coli O81 (strain ED1a)).